The chain runs to 740 residues: Ion-translocating oxidoreductase complex subunit C (740 aa).

4Fe-4S ferredoxin-type domains lie at 369–397 and 407–436; these read GEPQEEQSCIRCSACADACPADLLPQQLY and KATTHNIADCIECGACAWVCPSNIPLVQYF. [4Fe-4S] cluster-binding residues include C377, C380, C383, C387, C416, C419, C422, and C426. The disordered stretch occupies residues 602–716; that stretch reads KLEQQQANAE…EPEEQVDPRK (115 aa).

Belongs to the 4Fe4S bacterial-type ferredoxin family. RnfC subfamily. The complex is composed of six subunits: RsxA, RsxB, RsxC, RsxD, RsxE and RsxG. Requires [4Fe-4S] cluster as cofactor.

The protein resides in the cell inner membrane. Part of a membrane-bound complex that couples electron transfer with translocation of ions across the membrane. Required to maintain the reduced state of SoxR. The protein is Ion-translocating oxidoreductase complex subunit C of Escherichia coli (strain SE11).